A 142-amino-acid polypeptide reads, in one-letter code: Large ribosomal subunit protein uL11 (142 aa).

The protein belongs to the universal ribosomal protein uL11 family. In terms of assembly, part of the ribosomal stalk of the 50S ribosomal subunit. Interacts with L10 and the large rRNA to form the base of the stalk. L10 forms an elongated spine to which L12 dimers bind in a sequential fashion forming a multimeric L10(L12)X complex. Post-translationally, one or more lysine residues are methylated.

Forms part of the ribosomal stalk which helps the ribosome interact with GTP-bound translation factors. This chain is Large ribosomal subunit protein uL11, found in Haemophilus influenzae (strain 86-028NP).